Here is a 638-residue protein sequence, read N- to C-terminus: uncharacterized protein (638 aa).

This is an uncharacterized protein from Bos taurus (Bovine).